A 1985-amino-acid polypeptide reads, in one-letter code: Histone-lysine N-methyltransferase SETD1B (1985 aa).

Basic residues predominate over residues 1-11 (MENSHPHHHHQ). The interval 1 to 25 (MENSHPHHHHQQPPPQPGPSGERRN) is disordered. The interaction with WDR82 stretch occupies residues 67-97 (VEDPRVVGIWTKNKELELSVPKFKIDEFYVG). Residues 92-180 (DEFYVGPVPP…NIIHVELDTK (89 aa)) enclose the RRM domain. 5 disordered regions span residues 234–304 (GCGS…QDPT), 353–710 (GSSG…PPPA), 955–1480 (VKRK…RTGP), 1519–1624 (QLPP…STKL), and 1658–1687 (RGPWRRPPKKRHEDLVAPSASPEPSPPQPL). 4 stretches are compositionally biased toward polar residues: residues 242 to 258 (VTPNSGGTPFSQDTAYS), 264 to 273 (TPNSYGQGTP), 281 to 304 (PFSQDSSYSSRQPTPSYLFSQDPT), and 353 to 365 (GSSGTPFKAQSQD). A compositionally biased stretch (low complexity) spans 366–381 (ATTFAHTPPPAQTATA). Composition is skewed to pro residues over residues 393–404 (TPAPPFPPPPEE), 423–433 (PAPPPLPPAEP), and 440–449 (GTPPGPPPPD). Positions 484-512 (EKPHDSLDSRIEMLLKEQRTKLPFLREQD) are enriched in basic and acidic residues. Positions 522–535 (SPISSSSSQLSPLS) are enriched in low complexity. A compositionally biased stretch (pro residues) spans 583–594 (PRPPPEPGPPDP). The span at 628–637 (EDMEISDDEM) shows a compositional bias: acidic residues. A compositionally biased stretch (low complexity) spans 650 to 669 (PMVVTPGAGAVAAPNVLAPN). A compositionally biased stretch (pro residues) spans 670–710 (LPLPPPPGFPPLPPPPPPPPPQPGFPMPPPLPPPPPPPPPA). Phosphoserine occurs at positions 977 and 985. Positions 986 to 1006 (ERERDRDIADAPCELTKRDPK) are enriched in basic and acidic residues. Ser-1022 bears the Phosphoserine mark. Over residues 1032-1055 (LSASSSSSASSSSGSSTTSPSSSA) the composition is skewed to low complexity. The span at 1058 to 1083 (KEEEDRESTEEEEEEEEEEAEEEEEE) shows a compositional bias: acidic residues. A compositionally biased stretch (low complexity) spans 1087–1097 (SRISSPSSSSS). Acidic residues predominate over residues 1100 to 1120 (KDDEDDNEADSDGQIDSDIDD). Over residues 1143 to 1178 (SITTSKAPAESSSSSSESSGSSEFESSSESESSSSS) the composition is skewed to low complexity. Positions 1179–1202 (SEDEEEMTVPGVEEEEEEEEEEEK) are enriched in acidic residues. Residues 1205 to 1217 (AMAAATVVAMAEE) show a composition bias toward low complexity. The segment covering 1247–1261 (GTEEEVDIEAEDEVP) has biased composition (acidic residues). Phosphoserine is present on residues Ser-1283, Ser-1301, and Ser-1354. Positions 1331 to 1373 (EPPPMLSLPLQPPLPPPRLLRPPSPPPEPETPEPPKPPVPLEP) are enriched in pro residues. A compositionally biased stretch (low complexity) spans 1402 to 1442 (PGGEPPLSGSSSGLSLSSPQVPGSPFSYPSPSPGLSSGGLP). Residues 1535–1544 (IKRKPGRPRR) are compositionally biased toward basic residues. Pro residues-rich tracts occupy residues 1600-1619 (PAPPPPLPPQPPPPPPPPPV) and 1678-1687 (SPEPSPPQPL). Phosphoserine occurs at positions 1678 and 1682. The short motif at 1764–1769 (GCARSE) is the WDR5 interaction motif (WIN) element. Residues 1786–1819 (SRASTDEPPMDTQGMSIPAQPHASTRAGSERRSE) are disordered. Residues 1817–1822 (RSEQRR) carry the RxxxRR motif motif. The SET domain maps to 1846–1963 (KKLKFCKSHI…VNEEITYDYK (118 aa)). Tyr-1962 provides a ligand contact to S-adenosyl-L-methionine. The 17-residue stretch at 1969–1985 (VKIPCLCGSENCRGTLN) folds into the Post-SET domain.

It belongs to the class V-like SAM-binding methyltransferase superfamily. Component of the SET1B/COMPASS complex composed of the catalytic subunit SETD1B, WDR5, WDR82, RBBP5, ASH2L/ASH2, CXXC1/CFP1, HCFC1, DPY30 homotrimer and BOD1. Forms a core complex with the evolutionary conserved subcomplex WRAD composed of WDR5, RBBP5, ASH2L/ASH2 and DPY30 subunits; WRAD differentially stimulates the methyltransferase activity. Interacts with HCFC1 and ASH2L/ASH2. Interacts (via the RRM domain) with WDR82. Interacts (via the RRM domain) with hyperphosphorylated C-terminal domain (CTD) of RNA polymerase II large subunit (POLR2A) only in the presence of WDR82. Binds specifically to CTD heptad repeats phosphorylated on 'Ser-5' of each heptad. Interacts with RBM15. Interacts (via WIN motif) with WDR5. Widely expressed.

It localises to the nucleus. The protein localises to the nucleus speckle. It is found in the chromosome. The protein resides in the cytoplasm. The catalysed reaction is L-lysyl(4)-[histone H3] + S-adenosyl-L-methionine = N(6)-methyl-L-lysyl(4)-[histone H3] + S-adenosyl-L-homocysteine + H(+). It catalyses the reaction N(6)-methyl-L-lysyl(4)-[histone H3] + S-adenosyl-L-methionine = N(6),N(6)-dimethyl-L-lysyl(4)-[histone H3] + S-adenosyl-L-homocysteine + H(+). It carries out the reaction N(6),N(6)-dimethyl-L-lysyl(4)-[histone H3] + S-adenosyl-L-methionine = N(6),N(6),N(6)-trimethyl-L-lysyl(4)-[histone H3] + S-adenosyl-L-homocysteine + H(+). Histone methyltransferase that catalyzes methyl group transfer from S-adenosyl-L-methionine to the epsilon-amino group of 'Lys-4' of histone H3 (H3K4) via a non-processive mechanism. Part of chromatin remodeling machinery, forms H3K4me1, H3K4me2 and H3K4me3 methylation marks at active chromatin sites where transcription and DNA repair take place. Plays an essential role in regulating the transcriptional programming of multipotent hematopoietic progenitor cells and lymphoid lineage specification during hematopoiesis. The chain is Histone-lysine N-methyltransferase SETD1B (Setd1b) from Mus musculus (Mouse).